The primary structure comprises 256 residues: MRRLLPLAGATLLIAAAGGASGQQAGVGSIITRAMFESMLSHRGDQGCQGAFYTYDAFIKAAGDFPRFGTTGNDETRRRELAAFFGQTSHETTGGWATAPDGPFAWGYCRVNEITPSDPPYYGRGPIQLTHKYNYQLAGDALGLDLVNNPDLVSSDPVVAFRTAIWFWMTAQSPKPSCHDVITNQWTPSGDDRSSGRLPGYGMATNIINGGEECGKGYSTDNAKDRVGYYKRYCDMFRVGYGDNIACRDQKPYGGG.

The first 22 residues, 1–22, serve as a signal peptide directing secretion; sequence MRRLLPLAGATLLIAAAGGASG. 2 disulfide bridges follow: cysteine 48–cysteine 109 and cysteine 214–cysteine 247. The active-site Proton donor is glutamate 91.

Belongs to the glycosyl hydrolase 19 family. Chitinase class II subfamily. In terms of tissue distribution, expressed in leaves and at lower levels in roots, sheaths and meristems.

The enzyme catalyses Random endo-hydrolysis of N-acetyl-beta-D-glucosaminide (1-&gt;4)-beta-linkages in chitin and chitodextrins.. This Oryza sativa subsp. japonica (Rice) protein is Chitinase 11 (Cht11).